The sequence spans 779 residues: Acyl-CoA dehydrogenase family member 11 (779 aa).

N6-acetyllysine is present on residues K163, K166, and K175. S210 is modified (phosphoserine). The residue at position 323 (Y323) is a Phosphotyrosine. N6-succinyllysine is present on residues K368 and K390. Residues 503-513 (FCMTEPNVSSS), 511-513 (SSS), 537-539 (WSS), and S539 each bind FAD. Substrate is bound at residue S513. 628–631 (GPGR) serves as a coordination point for substrate. FAD is bound by residues R656, Q726, and 726–730 (QVHGG). G754 lines the substrate pocket. FAD-binding positions include 755–757 (PDE) and E757. An N6-acetyllysine modification is found at K765.

The protein belongs to the acyl-CoA dehydrogenase family. In terms of assembly, homodimer. FAD serves as cofactor.

The protein resides in the peroxisome. Its subcellular location is the mitochondrion membrane. It carries out the reaction a 2,3-saturated acyl-CoA + oxidized [electron-transfer flavoprotein] + H(+) = a (2E)-enoyl-CoA + reduced [electron-transfer flavoprotein]. It catalyses the reaction docosanoyl-CoA + oxidized [electron-transfer flavoprotein] + H(+) = (2E)-docosenoyl-CoA + reduced [electron-transfer flavoprotein]. The enzyme catalyses tetracosanoyl-CoA + oxidized [electron-transfer flavoprotein] + H(+) = (2E)-tetracosenoyl-CoA + reduced [electron-transfer flavoprotein]. The catalysed reaction is eicosanoyl-CoA + oxidized [electron-transfer flavoprotein] + H(+) = (2E)-eicosenoyl-CoA + reduced [electron-transfer flavoprotein]. It carries out the reaction hexacosanoyl-CoA + oxidized [electron-transfer flavoprotein] + H(+) = (2E)-hexacosenoyl-CoA + reduced [electron-transfer flavoprotein]. It catalyses the reaction tricosanoyl-CoA + oxidized [electron-transfer flavoprotein] + H(+) = (2E)-tricosenoyl-CoA + reduced [electron-transfer flavoprotein]. It participates in lipid metabolism; fatty acid beta-oxidation. In terms of biological role, acyl-CoA dehydrogenase, that exhibits maximal activity towards saturated C22-CoA. Probably participates in beta-oxydation and energy production but could also play a role in the metabolism of specific fatty acids to control fatty acids composition of cellular lipids in brain. This is Acyl-CoA dehydrogenase family member 11 (Acad11) from Mus musculus (Mouse).